The chain runs to 216 residues: Ribose-5-phosphate isomerase A (216 aa).

Substrate contacts are provided by residues 26-29 (TGST), 79-82 (DGAD), and 92-95 (KGGG). Glutamate 101 acts as the Proton acceptor in catalysis. Lysine 119 is a binding site for substrate.

The protein belongs to the ribose 5-phosphate isomerase family. As to quaternary structure, homodimer.

The enzyme catalyses aldehydo-D-ribose 5-phosphate = D-ribulose 5-phosphate. Its pathway is carbohydrate degradation; pentose phosphate pathway; D-ribose 5-phosphate from D-ribulose 5-phosphate (non-oxidative stage): step 1/1. In terms of biological role, catalyzes the reversible conversion of ribose-5-phosphate to ribulose 5-phosphate. The protein is Ribose-5-phosphate isomerase A of Legionella pneumophila subsp. pneumophila (strain Philadelphia 1 / ATCC 33152 / DSM 7513).